Consider the following 343-residue polypeptide: CRISPR-associated endonuclease Cas1 1 (343 aa).

Positions 166, 234, and 249 each coordinate Mn(2+).

The protein belongs to the CRISPR-associated endonuclease Cas1 family. In terms of assembly, homodimer, forms a heterotetramer with a Cas2 homodimer. It depends on Mg(2+) as a cofactor. Mn(2+) is required as a cofactor.

Functionally, CRISPR (clustered regularly interspaced short palindromic repeat), is an adaptive immune system that provides protection against mobile genetic elements (viruses, transposable elements and conjugative plasmids). CRISPR clusters contain spacers, sequences complementary to antecedent mobile elements, and target invading nucleic acids. CRISPR clusters are transcribed and processed into CRISPR RNA (crRNA). Acts as a dsDNA endonuclease. Involved in the integration of spacer DNA into the CRISPR cassette. This chain is CRISPR-associated endonuclease Cas1 1, found in Chlorobaculum tepidum (strain ATCC 49652 / DSM 12025 / NBRC 103806 / TLS) (Chlorobium tepidum).